Consider the following 651-residue polypeptide: Cylicin-1 (651 aa).

Disordered stretches follow at residues 110 to 241 and 267 to 615; these read LKKA…CSEN and NYSQ…CEPS. Composition is skewed to basic and acidic residues over residues 111–129 and 146–173; these read KKAE…PLKK and QIVE…EQSK. Residues 186–195 show a composition bias toward polar residues; that stretch reads QNSKTVSKNC. The span at 196–205 shows a compositional bias: basic and acidic residues; sequence SQKDKKDSKN. A compositionally biased stretch (polar residues) spans 230–241; sequence SNDPISEICSEN. Residues 271-281 show a composition bias toward low complexity; sequence NNSKNYSLKYT. A run of 8 repeats spans residues 278 to 305, 306 to 342, 343 to 379, 380 to 417, 418 to 453, 454 to 491, 492 to 531, and 532 to 553. Basic and acidic residues-rich tracts occupy residues 284 to 308, 318 to 331, 338 to 368, 375 to 402, 413 to 441, and 448 to 482; these read TKKD…DAKK, KKDD…KDTE, GDSK…KYPE, GDAK…DAKK, LESK…KNDE, and SEPK…KNAE. Residues 495–505 show a composition bias toward basic residues; sequence DKKHSKEKKGS. Basic and acidic residues predominate over residues 506–518; sequence KKDIKKDARKDTE. Residues 529–538 show a composition bias toward polar residues; it reads KTGFKTSTKI. The 8 X approximate tandem repeats stretch occupies residues 532–553; sequence FKTSTKIKGSDTESEESLYKPG. Positions 587-607 are enriched in basic and acidic residues; it reads TFNEKGEKASTGRVPPSREKP.

In terms of assembly, interacts with proteins of spermatozoa head including ACTL7A, CCIN, FAM209A and SPACA1; the interactions may be necessary for proper acrosome attachment to the nuclear envelope. Testis.

It is found in the cytoplasm. The protein resides in the cytoskeleton. The protein localises to the perinuclear theca. Its subcellular location is the calyx. In terms of biological role, plays a role in the establishment of normal sperm morphology during spermatogenesis and is required for acrosome attachment to the nuclear envelope. The sequence is that of Cylicin-1 (CYLC1) from Homo sapiens (Human).